We begin with the raw amino-acid sequence, 658 residues long: Pentatricopeptide repeat-containing protein At1g69290 (658 aa).

2 disordered regions span residues 1–23 (MFRK…ESPS) and 39–61 (TLSP…KSSF). Residues 50-61 (PKTLTPDQKSSF) show a composition bias toward polar residues. 11 PPR repeats span residues 214-249 (DLVA…GVKP), 250-284 (DELS…GFAS), 285-320 (RRIL…GEES), 323-353 (SVET…AQKL), 361-395 (DSSV…GGGS), 397-431 (GIGV…GLQL), 432-466 (DVEI…RVVD), 467-497 (LKGS…VVED), 503-537 (NSHD…RYEP), 538-568 (NNQT…IKGK), and 581-615 (DHAL…KIFV).

Belongs to the PPR family. P subfamily.

In Arabidopsis thaliana (Mouse-ear cress), this protein is Pentatricopeptide repeat-containing protein At1g69290.